The primary structure comprises 100 residues: U12-ctenitoxin-Pn1a (100 aa).

The first 28 residues, 1–28, serve as a signal peptide directing secretion; that stretch reads MKYRIFKMKYTLLFLSVIALVHIFAVEA. The propeptide occupies 29–41; the sequence is KDEPESDALVPQE. 5 disulfides stabilise this stretch: cysteine 44/cysteine 58, cysteine 51/cysteine 64, cysteine 57/cysteine 82, cysteine 66/cysteine 80, and cysteine 90/cysteine 97.

Belongs to the neurotoxin 09 (Tx3-6) family. As to expression, expressed by the venom gland.

It localises to the secreted. In terms of biological role, probable neurotoxin. This Phoneutria nigriventer (Brazilian armed spider) protein is U12-ctenitoxin-Pn1a.